The chain runs to 220 residues: Sec-independent protein translocase protein TatB (220 aa).

Residues 1–21 form a helical membrane-spanning segment; that stretch reads MFDIGFSELLLVLVIGLVVLG. A disordered region spans residues 190–220; it reads VTKQQIDTIDSHGTDLSSAGPSRIHQPGGDQ.

Belongs to the TatB family. In terms of assembly, the Tat system comprises two distinct complexes: a TatABC complex, containing multiple copies of TatA, TatB and TatC subunits, and a separate TatA complex, containing only TatA subunits. Substrates initially bind to the TatABC complex, which probably triggers association of the separate TatA complex to form the active translocon.

It is found in the cell inner membrane. Its function is as follows. Part of the twin-arginine translocation (Tat) system that transports large folded proteins containing a characteristic twin-arginine motif in their signal peptide across membranes. Together with TatC, TatB is part of a receptor directly interacting with Tat signal peptides. TatB may form an oligomeric binding site that transiently accommodates folded Tat precursor proteins before their translocation. This chain is Sec-independent protein translocase protein TatB, found in Yersinia pseudotuberculosis serotype I (strain IP32953).